We begin with the raw amino-acid sequence, 268 residues long: Taurine import ATP-binding protein TauB (268 aa).

The 233-residue stretch at 4–236 (LSIENISMRF…MGVNADLREV (233 aa)) folds into the ABC transporter domain. 41-48 (GPSGCGKT) lines the ATP pocket.

Belongs to the ABC transporter superfamily. Taurine importer (TC 3.A.1.17.1) family. In terms of assembly, the complex is composed of two ATP-binding proteins (TauB), two transmembrane proteins (TauC) and a solute-binding protein (TauA).

It is found in the cell inner membrane. It catalyses the reaction taurine(out) + ATP + H2O = taurine(in) + ADP + phosphate + H(+). Functionally, part of the ABC transporter complex TauABC involved in taurine import. Responsible for energy coupling to the transport system. The sequence is that of Taurine import ATP-binding protein TauB from Ruegeria pomeroyi (strain ATCC 700808 / DSM 15171 / DSS-3) (Silicibacter pomeroyi).